A 273-amino-acid polypeptide reads, in one-letter code: Probable nicotinate-nucleotide pyrophosphorylase [carboxylating] (273 aa).

Substrate is bound by residues arginine 91, 124–126, arginine 148, lysine 158, glutamate 188, aspartate 209, 235–237, and 256–258; these read TRK, SGN, and VGA.

This sequence belongs to the NadC/ModD family. Hexamer formed by 3 homodimers.

The enzyme catalyses nicotinate beta-D-ribonucleotide + CO2 + diphosphate = quinolinate + 5-phospho-alpha-D-ribose 1-diphosphate + 2 H(+). It participates in cofactor biosynthesis; NAD(+) biosynthesis; nicotinate D-ribonucleotide from quinolinate: step 1/1. Functionally, involved in the catabolism of quinolinic acid (QA). This Helicobacter pylori (strain ATCC 700392 / 26695) (Campylobacter pylori) protein is Probable nicotinate-nucleotide pyrophosphorylase [carboxylating] (nadC).